We begin with the raw amino-acid sequence, 256 residues long: Small ribosomal subunit protein eS1 (256 aa).

The span at 1–18 (MAVGKNKRLSKGKKGLKK) shows a compositional bias: basic residues. The disordered stretch occupies residues 1–20 (MAVGKNKRLSKGKKGLKKRT). An N-acetylalanine; partial modification is found at A2.

Belongs to the eukaryotic ribosomal protein eS1 family. In terms of assembly, component of the small ribosomal subunit. Mature ribosomes consist of a small (40S) and a large (60S) subunit. The 40S subunit contains about 33 different proteins and 1 molecule of RNA (18S). The 60S subunit contains about 49 different proteins and 3 molecules of RNA (25S, 5.8S and 5S).

Its subcellular location is the cytoplasm. This Talaromyces marneffei (strain ATCC 18224 / CBS 334.59 / QM 7333) (Penicillium marneffei) protein is Small ribosomal subunit protein eS1 (rps1).